Reading from the N-terminus, the 358-residue chain is tRNA N6-adenosine threonylcarbamoyltransferase (358 aa).

The Fe cation site is built by His118 and His122. Substrate is bound by residues Ile143 to Gly147, Asp176, Gly189, and Asn298. Asp326 lines the Fe cation pocket.

The protein belongs to the KAE1 / TsaD family. Fe(2+) serves as cofactor.

It is found in the cytoplasm. It catalyses the reaction L-threonylcarbamoyladenylate + adenosine(37) in tRNA = N(6)-L-threonylcarbamoyladenosine(37) in tRNA + AMP + H(+). Required for the formation of a threonylcarbamoyl group on adenosine at position 37 (t(6)A37) in tRNAs that read codons beginning with adenine. Is involved in the transfer of the threonylcarbamoyl moiety of threonylcarbamoyl-AMP (TC-AMP) to the N6 group of A37, together with TsaE and TsaB. TsaD likely plays a direct catalytic role in this reaction. The chain is tRNA N6-adenosine threonylcarbamoyltransferase from Rhodopirellula baltica (strain DSM 10527 / NCIMB 13988 / SH1).